A 331-amino-acid chain; its full sequence is 4-hydroxythreonine-4-phosphate dehydrogenase (331 aa).

Positions 137 and 138 each coordinate substrate. Residues His167, His212, and His267 each contribute to the a divalent metal cation site. Residues Lys275, Asn284, and Arg293 each coordinate substrate.

Belongs to the PdxA family. In terms of assembly, homodimer. Zn(2+) is required as a cofactor. Requires Mg(2+) as cofactor. The cofactor is Co(2+).

The protein localises to the cytoplasm. The catalysed reaction is 4-(phosphooxy)-L-threonine + NAD(+) = 3-amino-2-oxopropyl phosphate + CO2 + NADH. It participates in cofactor biosynthesis; pyridoxine 5'-phosphate biosynthesis; pyridoxine 5'-phosphate from D-erythrose 4-phosphate: step 4/5. Catalyzes the NAD(P)-dependent oxidation of 4-(phosphooxy)-L-threonine (HTP) into 2-amino-3-oxo-4-(phosphooxy)butyric acid which spontaneously decarboxylates to form 3-amino-2-oxopropyl phosphate (AHAP). The polypeptide is 4-hydroxythreonine-4-phosphate dehydrogenase (Yersinia pestis bv. Antiqua (strain Angola)).